A 182-amino-acid polypeptide reads, in one-letter code: U1 small nuclear ribonucleoprotein C (182 aa).

The Matrin-type zinc-finger motif lies at 4–36 (YLCDYCQVWLTHDSQSVRKAHNAGRAHIQNVQD). Residues 129 to 182 (PQTTASSNTQLTQQQQSLPQTNEHQRARTHSNANNHFTKTHHQGQRSHQRFVRA) form a disordered region. Residues 130–150 (QTTASSNTQLTQQQQSLPQTN) are compositionally biased toward low complexity. The span at 166-182 (TKTHHQGQRSHQRFVRA) shows a compositional bias: basic residues.

It belongs to the U1 small nuclear ribonucleoprotein C family. As to quaternary structure, U1 snRNP is composed of the 7 core Sm proteins smb1, smd1, smd2, smd3, sme1, smf1 and smg1 (Sm proteins B, D1, D2, D3, E, F and G, respectively) that assemble in a heptameric protein ring on the Sm site of the small nuclear RNA to form the core snRNP, and at least 9 U1 snRNP-specific proteins usp101/U1-70K, usp102/U1-A, usp103/U1-C, usp106/LUC7, usp105/PRP39, usp104/PRP40, usp107/U1-H, usp108/U1-J and usp109/U1-L. usp103/U1-C interacts with U1 snRNA and the 5' splice-site region of the pre-mRNA.

The protein localises to the nucleus. Its function is as follows. Component of the spliceosomal U1 snRNP, which is essential for recognition of the pre-mRNA 5' splice-site and the subsequent assembly of the spliceosome. usp103/U1-C is directly involved in initial 5' splice-site recognition for both constitutive and regulated alternative splicing. The interaction with the 5' splice-site seems to precede base-pairing between the pre-mRNA and the U1 snRNA. Stimulates commitment or early (E) complex formation by stabilizing the base pairing of the 5' end of the U1 snRNA and the 5' splice-site region. This Schizosaccharomyces pombe (strain 972 / ATCC 24843) (Fission yeast) protein is U1 small nuclear ribonucleoprotein C (usp103).